The chain runs to 260 residues: 14-3-3-like protein (260 aa).

The segment at 240 to 260 is disordered; that stretch reads DMQDDGGDEIKEAAPKPDEQY. Over residues 247–260 the composition is skewed to basic and acidic residues; sequence DEIKEAAPKPDEQY.

The protein belongs to the 14-3-3 family.

This is 14-3-3-like protein from Oenothera elata subsp. hookeri (Hooker's evening primrose).